The sequence spans 266 residues: Imidazole glycerol phosphate synthase subunit HisF (266 aa).

Active-site residues include aspartate 11 and aspartate 130.

The protein belongs to the HisA/HisF family. As to quaternary structure, heterodimer of HisH and HisF.

The protein resides in the cytoplasm. It carries out the reaction 5-[(5-phospho-1-deoxy-D-ribulos-1-ylimino)methylamino]-1-(5-phospho-beta-D-ribosyl)imidazole-4-carboxamide + L-glutamine = D-erythro-1-(imidazol-4-yl)glycerol 3-phosphate + 5-amino-1-(5-phospho-beta-D-ribosyl)imidazole-4-carboxamide + L-glutamate + H(+). It participates in amino-acid biosynthesis; L-histidine biosynthesis; L-histidine from 5-phospho-alpha-D-ribose 1-diphosphate: step 5/9. IGPS catalyzes the conversion of PRFAR and glutamine to IGP, AICAR and glutamate. The HisF subunit catalyzes the cyclization activity that produces IGP and AICAR from PRFAR using the ammonia provided by the HisH subunit. The polypeptide is Imidazole glycerol phosphate synthase subunit HisF (Nitrosopumilus maritimus (strain SCM1)).